We begin with the raw amino-acid sequence, 529 residues long: Amino acid transporter heavy chain SLC3A2 (529 aa).

Residues 1-20 (MSQDTEVDMKEVELNELEPE) form a disordered region. Topologically, residues 1 to 84 (MSQDTEVDMK…SPGWVRTRWA (84 aa)) are cytoplasmic. Serine 2 is subject to Phosphoserine. Residue threonine 5 is modified to Phosphothreonine. Residues 7-20 (VDMKEVELNELEPE) are compositionally biased toward basic and acidic residues. Lysine 49 participates in a covalent cross-link: Glycyl lysine isopeptide (Lys-Gly) (interchain with G-Cter in ubiquitin). The residue at position 65 (serine 65) is a Phosphoserine. Residue lysine 66 forms a Glycyl lysine isopeptide (Lys-Gly) (interchain with G-Cter in SUMO2) linkage. A helical; Signal-anchor for type II membrane protein transmembrane segment spans residues 85–105 (LLLLFWLGWIGMLAGAVVIIV). Residues 106-529 (RAPRCRELPV…GLLLHFPYVA (424 aa)) lie on the Extracellular side of the membrane. The N-linked (GlcNAc...) asparagine glycan is linked to asparagine 266. Serine 307 and serine 309 each carry phosphoserine. N-linked (GlcNAc...) asparagine glycosylation is found at asparagine 325 and asparagine 405. Serine 426 is modified (phosphoserine).

This sequence belongs to the SLC3A transporter family. As to quaternary structure, disulfide-linked heterodimer with a non-glycosylated light chain (SLC7A5, SLC7A6, SLC7A7, SLC7A8, SLC7A10 or SLC7A11). Interacts with TLCD3A/CT120 and ICAM1. Constitutively and specifically associates with beta-1 integrins (alpha-2/beta-1, alpha-3/beta-1, alpha-5/beta-1 and alpha-6/beta-1), but minimally with alpha-4/beta-1. Interacts with LAPTM4B; recruits SLC3A2 and SLC7A5 to lysosomes to promote leucine uptake into these organelles and is required for mTORC1 activation. Phosphorylation on Ser-307 or Ser-309 and on Ser-426 by ecto-protein kinases favors heterotypic cell-cell interactions. In terms of processing, N-glycosylated; N-glycosylation is crucial for trafficking and stability of SLC3A2 to the plasma membrane.

The protein resides in the apical cell membrane. Its subcellular location is the cell membrane. It localises to the cell junction. It is found in the lysosome membrane. The protein localises to the melanosome. The protein resides in the basolateral cell membrane. In terms of biological role, acts as a chaperone that facilitates biogenesis and trafficking of functional transporters heterodimers to the plasma membrane. Forms heterodimer with SLC7 family transporters (SLC7A5, SLC7A6, SLC7A7, SLC7A8, SLC7A10 and SLC7A11), a group of amino-acid antiporters. Heterodimers function as amino acids exchangers, the specificity of the substrate depending on the SLC7A subunit. Heterodimers formed by SLC3A2/SLC7A6 or SLC3A2/SLC7A7 mediate the uptake of dibasic amino acids. Heterodimer SLC3A2/SLC7A11 functions as an antiporter by mediating the exchange of extracellular anionic L-cystine and intracellular L-glutamate across the cellular plasma membrane. SLC3A2/SLC7A10 translocates small neutral L- and D-amino acids across the plasma membrane. SLC3A2/SLC75 or SLC3A2/SLC7A8 translocates neutral amino acids with broad specificity, thyroid hormones and L-DOPA. SLC3A2 is essential for plasma membrane localization, stability, and the transport activity of SLC7A5 and SLC7A8. When associated with LAPTM4B, the heterodimer SLC7A5 is recruited to lysosomes to promote leucine uptake into these organelles, and thereby mediates mTORC1 activation. Modulates integrin-related signaling and is essential for integrin-dependent cell spreading, migration and tumor progression. The protein is Amino acid transporter heavy chain SLC3A2 of Oryctolagus cuniculus (Rabbit).